The primary structure comprises 549 residues: Glucose-6-phosphate isomerase (549 aa).

Glutamate 355 (proton donor) is an active-site residue. Catalysis depends on residues histidine 386 and lysine 514.

The protein belongs to the GPI family.

It localises to the cytoplasm. The enzyme catalyses alpha-D-glucose 6-phosphate = beta-D-fructose 6-phosphate. Its pathway is carbohydrate biosynthesis; gluconeogenesis. The protein operates within carbohydrate degradation; glycolysis; D-glyceraldehyde 3-phosphate and glycerone phosphate from D-glucose: step 2/4. Its function is as follows. Catalyzes the reversible isomerization of glucose-6-phosphate to fructose-6-phosphate. This is Glucose-6-phosphate isomerase from Salmonella gallinarum (strain 287/91 / NCTC 13346).